Consider the following 188-residue polypeptide: Phosphoheptose isomerase (188 aa).

Residues 33–188 form the SIS domain; sequence VTASLRAGGK…CGLVEDALCS (156 aa). 48-50 is a binding site for substrate; that stretch reads NGG. Zn(2+) is bound by residues H57 and E61. Residues E61, 90-91, 116-118, S121, and Q168 contribute to the substrate site; these read ND and STS. 2 residues coordinate Zn(2+): Q168 and H176.

It belongs to the SIS family. GmhA subfamily. In terms of assembly, homotetramer. The cofactor is Zn(2+).

The protein resides in the cytoplasm. The catalysed reaction is 2 D-sedoheptulose 7-phosphate = D-glycero-alpha-D-manno-heptose 7-phosphate + D-glycero-beta-D-manno-heptose 7-phosphate. The protein operates within carbohydrate biosynthesis; D-glycero-D-manno-heptose 7-phosphate biosynthesis; D-glycero-alpha-D-manno-heptose 7-phosphate and D-glycero-beta-D-manno-heptose 7-phosphate from sedoheptulose 7-phosphate: step 1/1. Its function is as follows. Catalyzes the isomerization of sedoheptulose 7-phosphate in D-glycero-D-manno-heptose 7-phosphate. This chain is Phosphoheptose isomerase, found in Rhodospirillum rubrum (strain ATCC 11170 / ATH 1.1.1 / DSM 467 / LMG 4362 / NCIMB 8255 / S1).